The primary structure comprises 362 residues: METQVLTPHVYWAQRHRELYLRVELSDVQNPAISITDNVLHFKAQGHGAKGDNVYEFHLEFLDLVKPEPAYRLTQRQVNITVQKKGSHWWERLTKQEKRPLFLAPDFDRWLDESDAEMELRAKEEERLNKLRLEREGSPETLTNLKKGYLFMYNLVQLLGFSWIFVNLTVRFFILGKESFYDTFHNVADMMYFCQMLALVETLNAAIGVTSTPVLPALIQFLGRNFILFLVFGTMEEMQNKAVVFFVFYSWSAIEIFRYPFYMLSCIDMDWKVLTWLRYTMWIPLYPLGCLSEAVAVIQSIPVFNESGRFSFTLPYPVKMKVRFSFFLQVYLVMLFLGLYINFRHLYKQRRRRYGQKKKKLH.

Methionine 1 is subject to N-acetylmethionine. The Cytoplasmic segment spans residues 1–149 (METQVLTPHV…ETLTNLKKGY (149 aa)). Residues 5–94 (VLTPHVYWAQ…KGSHWWERLT (90 aa)) form the CS domain. Threonine 7 carries the post-translational modification Phosphothreonine. Residues 111–138 (LDESDAEMELRAKEEERLNKLRLEREGS) adopt a coiled-coil conformation. Position 114 is a phosphoserine (serine 114). A helical transmembrane segment spans residues 150–170 (LFMYNLVQLLGFSWIFVNLTV). Residues 171-189 (RFFILGKESFYDTFHNVAD) lie on the Lumenal side of the membrane. The chain crosses the membrane as a helical span at residues 190 to 210 (MMYFCQMLALVETLNAAIGVT). At 211–212 (ST) the chain is on the cytoplasmic side. A helical transmembrane segment spans residues 213-233 (PVLPALIQFLGRNFILFLVFG). At 234–242 (TMEEMQNKA) the chain is on the lumenal side. A helical transmembrane segment spans residues 243-263 (VVFFVFYSWSAIEIFRYPFYM). Residues 264–280 (LSCIDMDWKVLTWLRYT) are Cytoplasmic-facing. Residues 281-301 (MWIPLYPLGCLSEAVAVIQSI) form a helical membrane-spanning segment. Active-site residues include tyrosine 286 and glutamate 293. Residues 302–322 (PVFNESGRFSFTLPYPVKMKV) lie on the Lumenal side of the membrane. A helical membrane pass occupies residues 323–343 (RFSFFLQVYLVMLFLGLYINF). The Cytoplasmic segment spans residues 344–362 (RHLYKQRRRRYGQKKKKLH).

The protein belongs to the very long-chain fatty acids dehydratase HACD family. May interact with enzymes of the ELO family (including ELOVL1); with those enzymes that mediate condensation, the first of the four steps of the reaction cycle responsible for fatty acids elongation, may be part of a larger fatty acids elongase complex. Interacts with RAC1. Associates with internalized insulin receptor/INSR complexes on Golgi/endosomal membranes; HACD3/PTPLAD1 together with ATIC and PRKAA2/AMPK2 is proposed to be part of a signaling network regulating INSR autophosphorylation and endocytosis.

The protein localises to the endoplasmic reticulum membrane. It catalyses the reaction a very-long-chain (3R)-3-hydroxyacyl-CoA = a very-long-chain (2E)-enoyl-CoA + H2O. It carries out the reaction (3R)-hydroxyhexadecanoyl-CoA = (2E)-hexadecenoyl-CoA + H2O. It functions in the pathway lipid metabolism; fatty acid biosynthesis. Its function is as follows. Catalyzes the third of the four reactions of the long-chain fatty acids elongation cycle. This endoplasmic reticulum-bound enzymatic process, allows the addition of two carbons to the chain of long- and very long-chain fatty acids/VLCFAs per cycle. This enzyme catalyzes the dehydration of the 3-hydroxyacyl-CoA intermediate into trans-2,3-enoyl-CoA, within each cycle of fatty acid elongation. Thereby, it participates in the production of VLCFAs of different chain lengths that are involved in multiple biological processes as precursors of membrane lipids and lipid mediators. Involved in Rac1-signaling pathways leading to the modulation of gene expression. Promotes insulin receptor/INSR autophosphorylation and is involved in INSR internalization. In Mus musculus (Mouse), this protein is Very-long-chain (3R)-3-hydroxyacyl-CoA dehydratase 3.